The chain runs to 299 residues: Ribosomal protein L11 methyltransferase (299 aa).

Thr-149, Gly-170, Asp-192, and Asn-234 together coordinate S-adenosyl-L-methionine.

It belongs to the methyltransferase superfamily. PrmA family.

The protein resides in the cytoplasm. The catalysed reaction is L-lysyl-[protein] + 3 S-adenosyl-L-methionine = N(6),N(6),N(6)-trimethyl-L-lysyl-[protein] + 3 S-adenosyl-L-homocysteine + 3 H(+). Its function is as follows. Methylates ribosomal protein L11. The sequence is that of Ribosomal protein L11 methyltransferase from Chromohalobacter salexigens (strain ATCC BAA-138 / DSM 3043 / CIP 106854 / NCIMB 13768 / 1H11).